Consider the following 401-residue polypeptide: Probable plasmid-partitioning protein ParB (401 aa).

Residues 232-272 are disordered; the sequence is KTRGKENARDKAAAVKEEVKPSKKPKADNGEKTPKGRSHEE.

This sequence belongs to the ParB family.

The polypeptide is Probable plasmid-partitioning protein ParB (Xylella fastidiosa (strain 9a5c)).